Here is a 282-residue protein sequence, read N- to C-terminus: Energy-coupling factor transporter ATP-binding protein EcfA1 (282 aa).

An ABC transporter domain is found at Ile6–Asp243. Gly40–Ser47 lines the ATP pocket.

This sequence belongs to the ABC transporter superfamily. Energy-coupling factor EcfA family. In terms of assembly, forms a stable energy-coupling factor (ECF) transporter complex composed of 2 membrane-embedded substrate-binding proteins (S component), 2 ATP-binding proteins (A component) and 2 transmembrane proteins (T component).

The protein resides in the cell membrane. In terms of biological role, ATP-binding (A) component of a common energy-coupling factor (ECF) ABC-transporter complex. Unlike classic ABC transporters this ECF transporter provides the energy necessary to transport a number of different substrates. The sequence is that of Energy-coupling factor transporter ATP-binding protein EcfA1 from Lactobacillus delbrueckii subsp. bulgaricus (strain ATCC 11842 / DSM 20081 / BCRC 10696 / JCM 1002 / NBRC 13953 / NCIMB 11778 / NCTC 12712 / WDCM 00102 / Lb 14).